A 261-amino-acid polypeptide reads, in one-letter code: 1-(5-phosphoribosyl)-5-[(5-phosphoribosylamino)methylideneamino] imidazole-4-carboxamide isomerase (261 aa).

The active-site Proton acceptor is the D15. Residue D136 is the Proton donor of the active site.

The protein belongs to the HisA/HisF family.

The protein resides in the cytoplasm. It carries out the reaction 1-(5-phospho-beta-D-ribosyl)-5-[(5-phospho-beta-D-ribosylamino)methylideneamino]imidazole-4-carboxamide = 5-[(5-phospho-1-deoxy-D-ribulos-1-ylimino)methylamino]-1-(5-phospho-beta-D-ribosyl)imidazole-4-carboxamide. The protein operates within amino-acid biosynthesis; L-histidine biosynthesis; L-histidine from 5-phospho-alpha-D-ribose 1-diphosphate: step 4/9. This Synechococcus sp. (strain JA-3-3Ab) (Cyanobacteria bacterium Yellowstone A-Prime) protein is 1-(5-phosphoribosyl)-5-[(5-phosphoribosylamino)methylideneamino] imidazole-4-carboxamide isomerase.